A 303-amino-acid polypeptide reads, in one-letter code: Ribosomal protein L11 methyltransferase (303 aa).

S-adenosyl-L-methionine is bound by residues T144, G165, D187, and N235.

It belongs to the methyltransferase superfamily. PrmA family.

Its subcellular location is the cytoplasm. It catalyses the reaction L-lysyl-[protein] + 3 S-adenosyl-L-methionine = N(6),N(6),N(6)-trimethyl-L-lysyl-[protein] + 3 S-adenosyl-L-homocysteine + 3 H(+). In terms of biological role, methylates ribosomal protein L11. The polypeptide is Ribosomal protein L11 methyltransferase (Prochlorococcus marinus (strain MIT 9312)).